The following is a 457-amino-acid chain: UDP-N-acetylmuramoyl-tripeptide--D-alanyl-D-alanine ligase (457 aa).

Residue 109–115 coordinates ATP; that stretch reads GSSGKTT.

The protein belongs to the MurCDEF family. MurF subfamily.

The protein resides in the cytoplasm. The catalysed reaction is D-alanyl-D-alanine + UDP-N-acetyl-alpha-D-muramoyl-L-alanyl-gamma-D-glutamyl-meso-2,6-diaminopimelate + ATP = UDP-N-acetyl-alpha-D-muramoyl-L-alanyl-gamma-D-glutamyl-meso-2,6-diaminopimeloyl-D-alanyl-D-alanine + ADP + phosphate + H(+). It functions in the pathway cell wall biogenesis; peptidoglycan biosynthesis. Its function is as follows. Involved in cell wall formation. Catalyzes the final step in the synthesis of UDP-N-acetylmuramoyl-pentapeptide, the precursor of murein. The chain is UDP-N-acetylmuramoyl-tripeptide--D-alanyl-D-alanine ligase from Haemophilus influenzae (strain ATCC 51907 / DSM 11121 / KW20 / Rd).